A 158-amino-acid polypeptide reads, in one-letter code: Endoribonuclease YbeY (158 aa).

Zn(2+)-binding residues include His114, His118, and His124.

This sequence belongs to the endoribonuclease YbeY family. Zn(2+) is required as a cofactor.

The protein resides in the cytoplasm. Its function is as follows. Single strand-specific metallo-endoribonuclease involved in late-stage 70S ribosome quality control and in maturation of the 3' terminus of the 16S rRNA. The chain is Endoribonuclease YbeY from Pasteurella multocida (strain Pm70).